Here is an 83-residue protein sequence, read N- to C-terminus: uncharacterized protein (83 aa).

A helical transmembrane segment spans residues 50 to 70 (IMVFLGEAWIILIPFAIFCII).

This sequence belongs to the plectrovirus ORF7 family.

The protein localises to the host membrane. This is an uncharacterized protein from Spiroplasma citri (SpV1).